The primary structure comprises 200 residues: NAD(P)H dehydrogenase (quinone) (200 aa).

The region spanning 7-199 (LAIVFYSSTG…RQVELTAKLL (193 aa)) is the Flavodoxin-like domain. Residues 13 to 18 (SSTGTG), 86 to 88 (TRF), 121 to 127 (SAQNVNG), and H142 contribute to the FMN site.

Belongs to the WrbA family. As to quaternary structure, homotetramer. FMN is required as a cofactor.

It catalyses the reaction a quinone + NADH + H(+) = a quinol + NAD(+). The catalysed reaction is a quinone + NADPH + H(+) = a quinol + NADP(+). This is NAD(P)H dehydrogenase (quinone) from Deinococcus radiodurans (strain ATCC 13939 / DSM 20539 / JCM 16871 / CCUG 27074 / LMG 4051 / NBRC 15346 / NCIMB 9279 / VKM B-1422 / R1).